We begin with the raw amino-acid sequence, 116 residues long: Large ribosomal subunit protein bL17 (116 aa).

It belongs to the bacterial ribosomal protein bL17 family. As to quaternary structure, part of the 50S ribosomal subunit. Contacts protein L32.

This chain is Large ribosomal subunit protein bL17, found in Nostoc punctiforme (strain ATCC 29133 / PCC 73102).